A 127-amino-acid polypeptide reads, in one-letter code: Fluoride-specific ion channel FluC (127 aa).

Transmembrane regions (helical) follow at residues Leu4–Met24, Ile35–Phe55, Thr71–Leu91, and Leu101–Phe121. The Na(+) site is built by Gly75 and Thr78.

Belongs to the fluoride channel Fluc/FEX (TC 1.A.43) family.

It localises to the cell inner membrane. The enzyme catalyses fluoride(in) = fluoride(out). Its activity is regulated as follows. Na(+) is not transported, but it plays an essential structural role and its presence is essential for fluoride channel function. Fluoride-specific ion channel. Important for reducing fluoride concentration in the cell, thus reducing its toxicity. The polypeptide is Fluoride-specific ion channel FluC (Klebsiella pneumoniae (strain 342)).